A 156-amino-acid chain; its full sequence is ATP synthase subunit b (156 aa).

A helical membrane pass occupies residues 7–27; the sequence is LIVQMLVFVVFIGLTMKFIWP.

This sequence belongs to the ATPase B chain family. In terms of assembly, F-type ATPases have 2 components, F(1) - the catalytic core - and F(0) - the membrane proton channel. F(1) has five subunits: alpha(3), beta(3), gamma(1), delta(1), epsilon(1). F(0) has three main subunits: a(1), b(2) and c(10-14). The alpha and beta chains form an alternating ring which encloses part of the gamma chain. F(1) is attached to F(0) by a central stalk formed by the gamma and epsilon chains, while a peripheral stalk is formed by the delta and b chains.

The protein resides in the cell inner membrane. In terms of biological role, f(1)F(0) ATP synthase produces ATP from ADP in the presence of a proton or sodium gradient. F-type ATPases consist of two structural domains, F(1) containing the extramembraneous catalytic core and F(0) containing the membrane proton channel, linked together by a central stalk and a peripheral stalk. During catalysis, ATP synthesis in the catalytic domain of F(1) is coupled via a rotary mechanism of the central stalk subunits to proton translocation. Its function is as follows. Component of the F(0) channel, it forms part of the peripheral stalk, linking F(1) to F(0). The protein is ATP synthase subunit b of Coxiella burnetii (strain CbuK_Q154) (Coxiella burnetii (strain Q154)).